Here is a 278-residue protein sequence, read N- to C-terminus: Complement component 1 Q subcomponent-binding protein, mitochondrial (278 aa).

Residues 1 to 70 constitute a mitochondrion transit peptide; that stretch reads MFQLLRCVPR…PCACGCGCSG (70 aa). Residues 73-90 form a C1q binding region; that stretch reads TEGDKAFVDFLSDEIKEE. Position 84 is a phosphoserine (Ser84). N6-acetyllysine occurs at positions 88 and 91. The disordered stretch occupies residues 136–164; the sequence is IPPAFGGEEEEPSQGQKAEEQEPELTSTP. Residues 166 to 209 form an interaction with MAVS region; it reads FVVEVTKDGSSKALVLDCHYPEDEIGQEDDQSDIFSIKEVSFQA. At Tyr185 the chain carries Phosphotyrosine. Ser197 and Ser201 each carry phosphoserine. Thr210 bears the Phosphothreonine mark.

The protein belongs to the MAM33 family. As to quaternary structure, homotrimer; three monomers form a donut-shaped structure with an unusually asymmetric charge distribution on the surface. Interacts with CDK13, HRK, VTN, NFYB, ADRA1B, FOXC1, DDX21, DDX50, NCL, SRSF1 and SRSF9. Interacts with CD93; the association may represent a cell surface C1q receptor. Interacts with KRT1; the association represents a cell surface kininogen receptor. Interacts with CD209; the interaction is indicative for a C1q:C1QBP:CD209 signaling complex. Interacts with FBL and RRP1; the respective interactions with C1QBP are competitive. Probably associates with the mitoribosome. Interacts with MAVS; the interaction occurs upon viral transfection. Interacts with PPIF. Interacts with U2AF1L4. Interacts with PLEKHN1. Interacts with VGF-derived peptide TLQP-21. Interacts with MRE11 and RAD50; forming the MRC (MRE11-RAD50-C1QBP) complex that inhibits the activity of MRE11.

It is found in the mitochondrion matrix. It localises to the nucleus. The protein resides in the cell membrane. Its subcellular location is the secreted. The protein localises to the cytoplasm. It is found in the nucleolus. Its function is as follows. Multifunctional and multicompartmental protein involved in inflammation and infection processes, ribosome biogenesis, protein synthesis in mitochondria, regulation of apoptosis, transcriptional regulation and pre-mRNA splicing. At the cell surface is thought to act as an endothelial receptor for plasma proteins of the complement and kallikrein-kinin cascades. Putative receptor for C1q; specifically binds to the globular 'heads' of C1q thus inhibiting C1; may perform the receptor function through a complex with C1qR/CD93. In complex with cytokeratin-1/KRT1 is a high affinity receptor for kininogen-1/HMWK. Can also bind other plasma proteins, such as coagulation factor XII leading to its autoactivation. May function to bind initially fluid kininogen-1 to the cell membrane. The secreted form may enhance both extrinsic and intrinsic coagulation pathways. It is postulated that the cell surface form requires docking with transmembrane proteins for downstream signaling which might be specific for a cell-type or response. By acting as C1q receptor is involved in chemotaxis of immature dendritic cells and neutrophils and is proposed to signal through CD209/DC-SIGN on immature dendritic cells, through integrin alpha-4/beta-1 during trophoblast invasion of the decidua, and through integrin beta-1 during endothelial cell adhesion and spreading. Signaling involved in inhibition of innate immune response is implicating the PI3K-AKT/PKB pathway. Required for protein synthesis in mitochondria. In mitochondrial translation may be involved in formation of functional 55S mitoribosomes; the function seems to involve its RNA-binding activity. Acts as a RNA modification reader, which specifically recognizes and binds mitochondrial RNAs modified by C5-methylcytosine (m5C) in response to stress, and promotes recruitment of the mitochondrial degradosome complex, leading to their degradation. May be involved in the nucleolar ribosome maturation process; the function may involve the exchange of FBL for RRP1 in the association with pre-ribosome particles. Involved in regulation of RNA splicing by inhibiting the RNA-binding capacity of SRSF1 and its phosphorylation. Is required for the nuclear translocation of splicing factor U2AF1L4. Involved in regulation of CDKN2A- and HRK-mediated apoptosis. Stabilizes mitochondrial CDKN2A isoform smARF. May be involved in regulation of FOXC1 transcriptional activity and NFY/CCAAT-binding factor complex-mediated transcription. May play a role in antibacterial defense as it can bind to cell surface hyaluronan and inhibit Streptococcus pneumoniae hyaluronate lyase. May be involved in modulation of the immune response; ligation by HCV core protein is resulting in suppression of interleukin-12 production in monocyte-derived dendritic cells. Involved in regulation of antiviral response by inhibiting RIGI- and IFIH1-mediated signaling pathways probably involving its association with MAVS after viral infection. Acts as a regulator of DNA repair via homologous recombination by inhibiting the activity of MRE11: interacts with unphosphorylated MRE11 and RAD50 in absence of DNA damage, preventing formation and activity of the MRN complex. Following DNA damage, dissociates from phosphorylated MRE11, allowing formation of the MRN complex. The protein is Complement component 1 Q subcomponent-binding protein, mitochondrial (C1QBP) of Bos taurus (Bovine).